We begin with the raw amino-acid sequence, 70 residues long: MPEDNKAAAKVEPLRKARPCPECGKPSHREHYPFCSNRCREVDLSRWLTGAYAIPVADDETKAEYPDEEN.

Zn(2+)-binding residues include Cys-20, Cys-23, Cys-35, and Cys-39.

Belongs to the DNA gyrase inhibitor YacG family. Interacts with GyrB. It depends on Zn(2+) as a cofactor.

Its function is as follows. Inhibits all the catalytic activities of DNA gyrase by preventing its interaction with DNA. Acts by binding directly to the C-terminal domain of GyrB, which probably disrupts DNA binding by the gyrase. In Rhizobium leguminosarum bv. trifolii (strain WSM2304), this protein is DNA gyrase inhibitor YacG.